Consider the following 244-residue polypeptide: METRILVVNPNSSKSMTVSLRETIEKTFSMESCKISYFTGPDTSPPQIDGQETSIKSMEACLPLLIDDQESVYYFQKFNGILIACFSDHPLVAKIKDRAAKEKADVSIVGLLDSSINYCNLVGKKFSIITSNKEWIPILNNSVESKFLTGNTVNKNLWKGTVSTDLQVLDLHSPENFQQIAEIIYRENIKKLDSDIVILGCAGFSGLQNKLAKTFQRDGTLFLDTIEIGLQILITMIRFVNSQK.

It belongs to the HyuE racemase family.

This Saccharomyces cerevisiae (strain ATCC 204508 / S288c) (Baker's yeast) protein is Protein DCG1 (DCG1).